We begin with the raw amino-acid sequence, 446 residues long: Histidine--tRNA ligase (446 aa).

It belongs to the class-II aminoacyl-tRNA synthetase family. In terms of assembly, homodimer.

It is found in the cytoplasm. It carries out the reaction tRNA(His) + L-histidine + ATP = L-histidyl-tRNA(His) + AMP + diphosphate + H(+). The chain is Histidine--tRNA ligase from Burkholderia vietnamiensis (strain G4 / LMG 22486) (Burkholderia cepacia (strain R1808)).